The sequence spans 225 residues: Protein E26 (225 aa).

Interacts with proteins IE0 and IE1. Interacts with protein FP25K. Interacts with host importin alpha-16. Post-translationally, palmitoylated.

Its subcellular location is the host nucleus inner membrane. It localises to the virion. The protein localises to the host cytoplasm. The protein resides in the host nucleus. Plays a role in the sorting of ODV envelope proteins to the host inner nuclear membrane. May facilitate the fusion and release of nucleocapsids into the cytoplasm. Modulates the expression levels of IE0 and IE1. This Lepidoptera (butterflies and moths) protein is Protein E26 (DA26).